The following is an 843-amino-acid chain: Protein translocase subunit SecA (843 aa).

ATP is bound by residues Gln-85, 103–107, and Asp-490; that span reads GEGKT. The disordered stretch occupies residues 799–834; that stretch reads KNAVENRSDDSLPKQPVKAEPRVGRNDPCPCGSGKK. Positions 802-823 are enriched in basic and acidic residues; the sequence is VENRSDDSLPKQPVKAEPRVGR. Residues Cys-827, Cys-829, Cys-838, and Cys-839 each contribute to the Zn(2+) site.

The protein belongs to the SecA family. In terms of assembly, monomer and homodimer. Part of the essential Sec protein translocation apparatus which comprises SecA, SecYEG and auxiliary proteins SecDF. Other proteins may also be involved. It depends on Zn(2+) as a cofactor.

Its subcellular location is the cell membrane. It is found in the cytoplasm. It catalyses the reaction ATP + H2O + cellular proteinSide 1 = ADP + phosphate + cellular proteinSide 2.. Its function is as follows. Part of the Sec protein translocase complex. Interacts with the SecYEG preprotein conducting channel. Has a central role in coupling the hydrolysis of ATP to the transfer of proteins into and across the cell membrane, serving as an ATP-driven molecular motor driving the stepwise translocation of polypeptide chains across the membrane. This is Protein translocase subunit SecA from Heliobacterium modesticaldum (strain ATCC 51547 / Ice1).